The primary structure comprises 460 residues: Cysteine--tRNA ligase (460 aa).

Residue C27 participates in Zn(2+) binding. Positions 29–39 (PTVYDLIHVGN) match the 'HIGH' region motif. Positions 207, 232, and 236 each coordinate Zn(2+). The 'KMSKS' region signature appears at 264 to 268 (KMSKS). K267 is a binding site for ATP.

It belongs to the class-I aminoacyl-tRNA synthetase family. Monomer. Requires Zn(2+) as cofactor.

It is found in the cytoplasm. It catalyses the reaction tRNA(Cys) + L-cysteine + ATP = L-cysteinyl-tRNA(Cys) + AMP + diphosphate. The sequence is that of Cysteine--tRNA ligase (cysS) from Thermotoga maritima (strain ATCC 43589 / DSM 3109 / JCM 10099 / NBRC 100826 / MSB8).